The following is a 210-amino-acid chain: Dephospho-CoA kinase (210 aa).

Positions 4–202 constitute a DPCK domain; that stretch reads WVGLTGGIGS…AFYSGIFASK (199 aa). 12-17 is a binding site for ATP; the sequence is GSGKSA.

Belongs to the CoaE family.

The protein localises to the cytoplasm. The catalysed reaction is 3'-dephospho-CoA + ATP = ADP + CoA + H(+). It participates in cofactor biosynthesis; coenzyme A biosynthesis; CoA from (R)-pantothenate: step 5/5. In terms of biological role, catalyzes the phosphorylation of the 3'-hydroxyl group of dephosphocoenzyme A to form coenzyme A. The protein is Dephospho-CoA kinase of Neisseria meningitidis serogroup B (strain ATCC BAA-335 / MC58).